The following is a 324-amino-acid chain: Methionyl-tRNA formyltransferase (324 aa).

112–115 (SILP) contacts (6S)-5,6,7,8-tetrahydrofolate.

The protein belongs to the Fmt family.

It carries out the reaction L-methionyl-tRNA(fMet) + (6R)-10-formyltetrahydrofolate = N-formyl-L-methionyl-tRNA(fMet) + (6S)-5,6,7,8-tetrahydrofolate + H(+). Attaches a formyl group to the free amino group of methionyl-tRNA(fMet). The formyl group appears to play a dual role in the initiator identity of N-formylmethionyl-tRNA by promoting its recognition by IF2 and preventing the misappropriation of this tRNA by the elongation apparatus. The protein is Methionyl-tRNA formyltransferase of Shewanella loihica (strain ATCC BAA-1088 / PV-4).